The primary structure comprises 93 residues: Translation initiation factor IF-1 (93 aa).

The 72-residue stretch at 1-72 (MAKEELIQFE…EKGRLIFRHK (72 aa)) folds into the S1-like domain. A disordered region spans residues 69–93 (FRHKDERPSGAPRGGPPRGGQFRRR).

It belongs to the IF-1 family. Component of the 30S ribosomal translation pre-initiation complex which assembles on the 30S ribosome in the order IF-2 and IF-3, IF-1 and N-formylmethionyl-tRNA(fMet); mRNA recruitment can occur at any time during PIC assembly.

It localises to the cytoplasm. Its function is as follows. One of the essential components for the initiation of protein synthesis. Stabilizes the binding of IF-2 and IF-3 on the 30S subunit to which N-formylmethionyl-tRNA(fMet) subsequently binds. Helps modulate mRNA selection, yielding the 30S pre-initiation complex (PIC). Upon addition of the 50S ribosomal subunit IF-1, IF-2 and IF-3 are released leaving the mature 70S translation initiation complex. This Nitrobacter hamburgensis (strain DSM 10229 / NCIMB 13809 / X14) protein is Translation initiation factor IF-1.